Here is a 396-residue protein sequence, read N- to C-terminus: NAD(P)H oxidoreductase RTN4IP1, mitochondrial (396 aa).

The N-terminal 40 residues, 1–40, are a transit peptide targeting the mitochondrion; sequence MEFLKTCVLRRNACTAVCFWRSKVVQKPSVRRISTTSPRS. An Enoyl reductase (ER) domain is found at 52 to 393; it reads GKNEVLRFTQ…RGHARGKTVI (342 aa). The NADPH site is built by S214, G216, V217, S237, Y255, N276, L300, A341, F343, H386, A387, and R388.

It belongs to the zinc-containing alcohol dehydrogenase family. Quinone oxidoreductase subfamily. As to quaternary structure, interacts with RTN4, UQCRC1 and UQCRC2. In terms of tissue distribution, widely expressed in mitochondria-enriched tissues. Found in heart, muscle, kidney, liver, brain and placenta.

Its subcellular location is the mitochondrion matrix. It is found in the mitochondrion outer membrane. The catalysed reaction is a 3-demethylubiquinone + NADH + 2 H(+) = a 3-demethylubiquinol + NAD(+). The enzyme catalyses a 3-demethylubiquinone + NADPH + 2 H(+) = a 3-demethylubiquinol + NADP(+). It carries out the reaction 3-demethylubiquinone-10 + NADH + 2 H(+) = 3-demethylubiquinol-10 + NAD(+). It catalyses the reaction 3-demethylubiquinone-10 + NADPH + 2 H(+) = 3-demethylubiquinol-10 + NADP(+). The protein operates within cofactor biosynthesis; ubiquinone biosynthesis. Functionally, NAD(P)H oxidoreductase involved in the ubiquinone biosynthetic pathway. Required for the O-methyltransferase activity of COQ3. Able to catalyze the oxidoreduction of 3-demethylubiquinone into 3-demethylubiquinol in vitro. However, it is unclear if 3-demethylubiquinone constitutes a substrate in vivo. May also play a role in the regulation of retinal ganglion cell (RGC) neurite outgrowth, and hence in the development of the inner retina and optic nerve. Appears to be a potent inhibitor of regeneration following spinal cord injury. The chain is NAD(P)H oxidoreductase RTN4IP1, mitochondrial from Homo sapiens (Human).